Consider the following 366-residue polypeptide: MITLQRTPLFDVYAKYGGKTVDFGGWELPVQFSSIKEEHEAVRTGAGLFDVSHMGEVEVKGVDSLAFLQRVVTNDVSTLKVGGAQYTAMCYENGGTVDDLLIYKRGEEDYLLVINASNIEKDYEWLASHVIGDAKVVNVSSEVAQLAIQGPKAEGILQKVVSEDLKEIKFFKFKNNILVDGIPALVSRTGYTGEDGFEIYCKSEDAAKLWEKLLEVGAEEGLKPCGLGARDTLRFEATLPLYGQELSKDITPIEAGIGFAVKPNKEADFFGKETLKEQKENGASRKLVGIEVIERGIPRTHYPVFIGEEKIGEVTSGTQSPTLKKSIGLALIDVKYAAVDTEVEIEIRNKRVKAVVVPTPFYKRSK.

Belongs to the GcvT family. The glycine cleavage system is composed of four proteins: P, T, L and H.

It catalyses the reaction N(6)-[(R)-S(8)-aminomethyldihydrolipoyl]-L-lysyl-[protein] + (6S)-5,6,7,8-tetrahydrofolate = N(6)-[(R)-dihydrolipoyl]-L-lysyl-[protein] + (6R)-5,10-methylene-5,6,7,8-tetrahydrofolate + NH4(+). Its function is as follows. The glycine cleavage system catalyzes the degradation of glycine. The sequence is that of Aminomethyltransferase from Bacillus mycoides (strain KBAB4) (Bacillus weihenstephanensis).